Consider the following 505-residue polypeptide: Glycerol kinase 3 (505 aa).

Thr12 contacts ADP. The ATP site is built by Thr12, Thr13, and Ser14. Thr12 is a binding site for sn-glycerol 3-phosphate. Arg16 is an ADP binding site. Sn-glycerol 3-phosphate contacts are provided by Arg82, Glu83, Tyr134, and Asp249. Residues Arg82, Glu83, Tyr134, Asp249, and Gln250 each contribute to the glycerol site. Thr271 and Gly315 together coordinate ADP. ATP-binding residues include Thr271, Gly315, Gln319, and Gly416. ADP is bound by residues Gly416 and Asn420.

The protein belongs to the FGGY kinase family.

It catalyses the reaction glycerol + ATP = sn-glycerol 3-phosphate + ADP + H(+). It functions in the pathway polyol metabolism; glycerol degradation via glycerol kinase pathway; sn-glycerol 3-phosphate from glycerol: step 1/1. Inhibited by fructose 1,6-bisphosphate (FBP). Key enzyme in the regulation of glycerol uptake and metabolism. Catalyzes the phosphorylation of glycerol to yield sn-glycerol 3-phosphate. The polypeptide is Glycerol kinase 3 (Streptomyces avermitilis (strain ATCC 31267 / DSM 46492 / JCM 5070 / NBRC 14893 / NCIMB 12804 / NRRL 8165 / MA-4680)).